The chain runs to 222 residues: Vesicle-associated membrane protein 724 (222 aa).

Topologically, residues 1 to 197 (MGQESFIYSF…LWYQNMKIKL (197 aa)) are cytoplasmic. One can recognise a Longin domain in the interval 10-115 (FVARGTMILA…SLNKEFGPVM (106 aa)). One can recognise a v-SNARE coiled-coil homology domain in the interval 131–191 (KLIKVKAQVS…TQVRRKLWYQ (61 aa)). The helical; Anchor for type IV membrane protein transmembrane segment at 198 to 218 (VVLGILLLLVLIIWISVCHGF) threads the bilayer. Topologically, residues 219–222 (NCTD) are vesicular.

It belongs to the synaptobrevin family. Expressed in flowers, leaves, stems and roots.

It is found in the cell membrane. Its subcellular location is the early endosome membrane. In terms of biological role, involved in the targeting and/or fusion of transport vesicles to their target membrane. In Arabidopsis thaliana (Mouse-ear cress), this protein is Vesicle-associated membrane protein 724.